We begin with the raw amino-acid sequence, 290 residues long: Nitrogenase iron protein 2 (290 aa).

Residue 10–17 (GKGGIGKS) coordinates ATP. Cysteine 98 is a binding site for [4Fe-4S] cluster. The residue at position 101 (arginine 101) is an ADP-ribosylarginine; by dinitrogenase reductase ADP-ribosyltransferase. Cysteine 133 is a [4Fe-4S] cluster binding site.

It belongs to the NifH/BchL/ChlL family. In terms of assembly, homodimer. The cofactor is [4Fe-4S] cluster. The reversible ADP-ribosylation of Arg-101 inactivates the nitrogenase reductase and regulates nitrogenase activity.

It carries out the reaction N2 + 8 reduced [2Fe-2S]-[ferredoxin] + 16 ATP + 16 H2O = H2 + 8 oxidized [2Fe-2S]-[ferredoxin] + 2 NH4(+) + 16 ADP + 16 phosphate + 6 H(+). Functionally, the key enzymatic reactions in nitrogen fixation are catalyzed by the nitrogenase complex, which has 2 components: the iron protein (component 2) and a component 1 which is either a molybdenum-iron protein, a vanadium-iron, or an iron-iron protein. The protein is Nitrogenase iron protein 2 (vnfH) of Azotobacter vinelandii.